A 493-amino-acid polypeptide reads, in one-letter code: Serine/threonine-protein kinase chk-1 (493 aa).

The Protein kinase domain occupies Tyr-26 to Phe-286. ATP-binding positions include Leu-32 to Val-40 and Lys-56. Asp-150 functions as the Proton acceptor in the catalytic mechanism. The tract at residues Asp-308–Ser-348 is disordered. Over residues Pro-312–Ala-324 the composition is skewed to polar residues. Positions Leu-333 to Arg-344 are enriched in basic and acidic residues.

Belongs to the protein kinase superfamily. CAMK Ser/Thr protein kinase family. NIM1 subfamily.

It localises to the cytoplasm. The protein localises to the nucleus. It catalyses the reaction L-seryl-[protein] + ATP = O-phospho-L-seryl-[protein] + ADP + H(+). The catalysed reaction is L-threonyl-[protein] + ATP = O-phospho-L-threonyl-[protein] + ADP + H(+). Its function is as follows. Serine/threonine-protein kinase which is required for checkpoint-mediated cell cycle arrest and activation of DNA repair in response to the presence of DNA damage or unreplicated DNA. May also negatively regulate cell cycle progression during unperturbed cell cycles. Required for checkpoint mediated cell cycle arrest in response to DNA damage in germline cells. Essential for embryogenesis. In Caenorhabditis briggsae, this protein is Serine/threonine-protein kinase chk-1 (chk-1).